A 521-amino-acid polypeptide reads, in one-letter code: MNPESAQGHGARAPMLQAARGLKANLRDVATRPWRSLARMPKPEVQDPETAAAGHEGLLAIERSFQNAAKSSNLDLMEKLFEKKVNINAVNNMNRTALHFAVGRNSLSAVDFLLSHKARVDVADKHGLTVIHLAAWSGSFEIMLMLVKAGADQRAKNQEGMNALHLAAQNNNLHIVDYLIHDLHLHDLNQPNERGRKPFHLAAERGHVEMIEKLIFLNLHTSEKDKDGNTALHLAAMHGHSPAVQVLLTQWSEVNESNELNVSALQTATRNGHTALVNFLLGENADLQQQKESKEPPLHLAVINNRPAVVNSLLSARHDVDVLDQRRQTPLHVAADLGNVELVETLLKAGCNLKITDKQGKTALAVAARSQHSLVVDMLIKAERYYAWREEHRESIQDSAVSSTLTFKQDHSLETRQIRTLLWNLAYRQLKKKDWQRLARLWSFTEDQIRAIEEQWSGNDSFHEHGYRALLIWLHGALLTQLDPAKQLYEELLCAGFPELAEKIRQFKSKTDSSSKKCAVS.

ANK repeat units lie at residues 60–89, 93–122, 126–155, 159–190, 194–223, 227–256, 260–289, 293–322, 326–355, and 359–388; these read AIERSFQNAAKSSNLDLMEKLFEKKVNINA, MNRTALHFAVGRNSLSAVDFLLSHKARVDV, HGLTVIHLAAWSGSFEIMLMLVKAGADQRA, EGMNALHLAAQNNNLHIVDYLIHDLHLHDLNQ, RGRKPFHLAAERGHVEMIEKLIFLNLHTSE, DGNTALHLAAMHGHSPAVQVLLTQWSEVNE, LNVSALQTATRNGHTALVNFLLGENADLQQ, SKEPPLHLAVINNRPAVVNSLLSARHDVDV, RRQTPLHVAADLGNVELVETLLKAGCNLKI, and QGKTALAVAARSQHSLVVDMLIKAERYYAW. One can recognise a Death domain in the interval 420–508; sequence TLLWNLAYRQ…ELAEKIRQFK (89 aa).

This chain is Ankyrin repeat and death domain-containing protein 1B (Ankdd1b), found in Mus musculus (Mouse).